Here is a 485-residue protein sequence, read N- to C-terminus: Rhamnulokinase (485 aa).

Residue 11–15 (ASSGR) participates in ATP binding. Substrate-binding positions include alanine 79 and 234–236 (HDT). Aspartate 235 serves as the catalytic Proton acceptor. Threonine 257 serves as a coordination point for ATP. Residue asparagine 294 participates in substrate binding. The ATP site is built by glutamine 302 and glycine 401.

Belongs to the rhamnulokinase family. The cofactor is Mg(2+).

The enzyme catalyses L-rhamnulose + ATP = L-rhamnulose 1-phosphate + ADP + H(+). It participates in carbohydrate degradation; L-rhamnose degradation; glycerone phosphate from L-rhamnose: step 2/3. Involved in the catabolism of L-rhamnose (6-deoxy-L-mannose). Catalyzes the transfer of the gamma-phosphate group from ATP to the 1-hydroxyl group of L-rhamnulose to yield L-rhamnulose 1-phosphate. The polypeptide is Rhamnulokinase (Ligilactobacillus salivarius (strain UCC118) (Lactobacillus salivarius)).